The following is a 344-amino-acid chain: Cyclin-dependent kinase 20 (344 aa).

Residues 4–288 form the Protein kinase domain; it reads YSILGRIGEG…ARQALLHPYF (285 aa). ATP-binding positions include 10–18 and K33; that span reads IGEGAHGIV. The active-site Proton acceptor is the D127.

The protein belongs to the protein kinase superfamily. CMGC Ser/Thr protein kinase family. CDC2/CDKX subfamily. In terms of assembly, monomer. Interacts with tbc1d32.

It is found in the nucleus. It localises to the cytoplasm. Its subcellular location is the cell projection. The protein resides in the cilium. The catalysed reaction is L-seryl-[protein] + ATP = O-phospho-L-seryl-[protein] + ADP + H(+). It carries out the reaction L-threonyl-[protein] + ATP = O-phospho-L-threonyl-[protein] + ADP + H(+). Involved in cell growth. Activates cdk2, a kinase involved in the control of the cell cycle, by phosphorylating residue 'Thr-160'. Required for high-level Shh responses in the developing neural tube. Together with tbc1d32, controls the structure of the primary cilium by coordinating assembly of the ciliary membrane and axoneme, allowing gli2 to be properly activated in response to SHH signaling. The polypeptide is Cyclin-dependent kinase 20 (cdk20) (Danio rerio (Zebrafish)).